The following is a 543-amino-acid chain: Hydroxylamine reductase (543 aa).

4 residues coordinate [4Fe-4S] cluster: Cys5, Cys8, Cys17, and Cys23. Hybrid [4Fe-2O-2S] cluster contacts are provided by His236, Glu260, Cys304, Cys398, Cys426, Cys451, Glu486, and Lys488. Cysteine persulfide is present on Cys398.

This sequence belongs to the HCP family. [4Fe-4S] cluster is required as a cofactor. It depends on hybrid [4Fe-2O-2S] cluster as a cofactor.

The protein resides in the cytoplasm. The enzyme catalyses A + NH4(+) + H2O = hydroxylamine + AH2 + H(+). Catalyzes the reduction of hydroxylamine to form NH(3) and H(2)O. In Bacteroides fragilis (strain YCH46), this protein is Hydroxylamine reductase.